A 516-amino-acid polypeptide reads, in one-letter code: Methionine--tRNA ligase (516 aa).

Residues F13–H23 carry the 'HIGH' region motif. The short motif at K299–S303 is the 'KMSKS' region element. K302 is a binding site for ATP.

The protein belongs to the class-I aminoacyl-tRNA synthetase family. MetG type 2B subfamily. In terms of assembly, monomer.

It is found in the cytoplasm. It catalyses the reaction tRNA(Met) + L-methionine + ATP = L-methionyl-tRNA(Met) + AMP + diphosphate. Is required not only for elongation of protein synthesis but also for the initiation of all mRNA translation through initiator tRNA(fMet) aminoacylation. The sequence is that of Methionine--tRNA ligase from Mesorhizobium japonicum (strain LMG 29417 / CECT 9101 / MAFF 303099) (Mesorhizobium loti (strain MAFF 303099)).